Consider the following 296-residue polypeptide: Formamidopyrimidine-DNA glycosylase (296 aa).

Pro-2 serves as the catalytic Schiff-base intermediate with DNA. Glu-3 acts as the Proton donor in catalysis. The active-site Proton donor; for beta-elimination activity is the Lys-58. The DNA site is built by His-104, Arg-126, and Lys-169. The segment at 260-296 (SVYDRAGEACRKPGCDGTVTRIVQAGRSTFHCPRCQK) adopts an FPG-type zinc-finger fold. The Proton donor; for delta-elimination activity role is filled by Arg-286.

Belongs to the FPG family. In terms of assembly, monomer. The cofactor is Zn(2+).

It catalyses the reaction Hydrolysis of DNA containing ring-opened 7-methylguanine residues, releasing 2,6-diamino-4-hydroxy-5-(N-methyl)formamidopyrimidine.. The enzyme catalyses 2'-deoxyribonucleotide-(2'-deoxyribose 5'-phosphate)-2'-deoxyribonucleotide-DNA = a 3'-end 2'-deoxyribonucleotide-(2,3-dehydro-2,3-deoxyribose 5'-phosphate)-DNA + a 5'-end 5'-phospho-2'-deoxyribonucleoside-DNA + H(+). Involved in base excision repair of DNA damaged by oxidation or by mutagenic agents. Acts as a DNA glycosylase that recognizes and removes damaged bases. Has a preference for oxidized purines, such as 7,8-dihydro-8-oxoguanine (8-oxoG). Has AP (apurinic/apyrimidinic) lyase activity and introduces nicks in the DNA strand. Cleaves the DNA backbone by beta-delta elimination to generate a single-strand break at the site of the removed base with both 3'- and 5'-phosphates. The polypeptide is Formamidopyrimidine-DNA glycosylase (Sinorhizobium fredii (strain NBRC 101917 / NGR234)).